Here is a 116-residue protein sequence, read N- to C-terminus: NADH-ubiquinone oxidoreductase chain 3 (116 aa).

The next 3 helical transmembrane spans lie at 3–23 (LITTIIAITITLSAVLATVSF), 56–76 (FFLIAILFLLFDLEIALLLPL), and 85–105 (PALTLAWSAAVLALLTLGLIY).

It belongs to the complex I subunit 3 family.

Its subcellular location is the mitochondrion membrane. The enzyme catalyses a ubiquinone + NADH + 5 H(+)(in) = a ubiquinol + NAD(+) + 4 H(+)(out). In terms of biological role, core subunit of the mitochondrial membrane respiratory chain NADH dehydrogenase (Complex I) that is believed to belong to the minimal assembly required for catalysis. Complex I functions in the transfer of electrons from NADH to the respiratory chain. The immediate electron acceptor for the enzyme is believed to be ubiquinone. This is NADH-ubiquinone oxidoreductase chain 3 (MT-ND3) from Salmo trutta (Brown trout).